A 297-amino-acid polypeptide reads, in one-letter code: NAC domain-containing protein 72 (297 aa).

Residues 14 to 162 (LPPGFRFYPT…DWVLCRIYKK (149 aa)) enclose the NAC domain. A DNA-binding region spans residues 111–168 (VGIKKALVFYAGKAPKGTKTNWIMHEYRLIEHSRSHGSSKLDDWVLCRIYKKTSGSQR). Disordered regions lie at residues 168–195 (RQAVTPVQACREEHSTNGSSSSSSSQLD) and 259–278 (GEAESGHVNRQQNSSGLTQS). Positions 266–277 (VNRQQNSSGLTQ) are enriched in polar residues.

As to expression, expressed in leaves and in root pericycle and epidermis.

Its subcellular location is the nucleus. In terms of biological role, transcription factors that bind specifically to the 5'-CATGTG-3' motif and with bipartite regions with 5'-CGTr-3' and 5'-YACG-3' as cores. Involved in the regulation of metabolic reprogramming during senescence by promoting the chloroplast protein degradation and the catabolism of lysine, phytol and free fatty acids via the induction of CV, LKR/SDH and PES1 expression. Also triggers the degradation of starch and the accumulation of mono- and disaccharides during senescence by enhancing the expression of AMY1, SFP1 and SWEET15. The chain is NAC domain-containing protein 72 from Arabidopsis thaliana (Mouse-ear cress).